We begin with the raw amino-acid sequence, 241 residues long: Ribulose-phosphate 3-epimerase 2 (241 aa).

Ser21 lines the substrate pocket. Positions 46, 48, and 79 each coordinate a divalent metal cation. Asp48 acts as the Proton acceptor in catalysis. Substrate contacts are provided by residues His79, 155–158, 192–194, and 214–215; these read GFGG, DGG, and GS. Asp192 is a binding site for a divalent metal cation. The active-site Proton donor is the Asp192.

The protein belongs to the ribulose-phosphate 3-epimerase family. A divalent metal cation is required as a cofactor.

The catalysed reaction is D-ribulose 5-phosphate = D-xylulose 5-phosphate. Its pathway is carbohydrate degradation. Functionally, catalyzes the reversible epimerization of D-ribulose 5-phosphate to D-xylulose 5-phosphate. This Cupriavidus necator (strain ATCC 17699 / DSM 428 / KCTC 22496 / NCIMB 10442 / H16 / Stanier 337) (Ralstonia eutropha) protein is Ribulose-phosphate 3-epimerase 2.